The sequence spans 726 residues: MSTSDDIHNTTATGKCPFHQGGHDQSAGAGTTTRDWWPNQLRVDLLNQHSNRSNPLGEDFDYRKEFSKLDYYGLKKDLKALLTESQPWWPADWGSYAGLFIRMAWHGAGTYRSIDGRGGAGRGQQRFAPLNSWPDNVSLDKARRLLWPIKQKYGQKISWADLFILAGNVALENSGFRTFGFGAGREDVWEPDLDVNWGDEKAWLTHRHPEALAKAPLGATEMGLIYVNPEGPDHSGEPLSAAAAIRATFGNMGMNDEETVALIAGGHTLGKTHGAGPTSNVGPDPEAAPIEEQGLGWASTYGSGVGADAITSGLEVVWTQTPTQWSNYFFENLFKYEWVQTRSPAGAIQFEAVDAPEIIPDPFDPSKKRKPTMLVTDLTLRFDPEFEKISRRFLNDPQAFNEAFARAWFKLTHRDMGPKSRYIGPEVPKEDLIWQDPLPQPIYNPTEQDIIDLKFAIADSGLSVSELVSVAWASASTFRGGDKRGGANGARLALMPQRDWDVNAAAVRALPVLEKIQKESGKASLADIIVLAGVVGVEKAASAAGLSIHVPFAPGRVDARQDQTDIEMFELLEPIADGFRNYRARLDVSTTESLLIDKAQQLTLTAPEMTALVGGMRVLGANFDSSKNGVFTDRVGVLSNDFFVNLLDMRYEWKATDESKELFEGRDRETGEVKYTASRADLVFGSNSVLRAVAEVYASSDAHEKFVKDFVAAWVKVMNLDRFDLL.

The segment at 1 to 33 (MSTSDDIHNTTATGKCPFHQGGHDQSAGAGTTT) is disordered. The segment at residues 105 to 226 (WHGAGTYRSI…LGATEMGLIY (122 aa)) is a cross-link (tryptophyl-tyrosyl-methioninium (Trp-Tyr) (with M-252)). The Proton acceptor role is filled by histidine 106. The segment at residues 226–252 (YVNPEGPDHSGEPLSAAAAIRATFGNM) is a cross-link (tryptophyl-tyrosyl-methioninium (Tyr-Met) (with W-105)). Residue histidine 267 coordinates heme b.

The protein belongs to the peroxidase family. Peroxidase/catalase subfamily. Homodimer or homotetramer. It depends on heme b as a cofactor. Post-translationally, formation of the three residue Trp-Tyr-Met cross-link is important for the catalase, but not the peroxidase activity of the enzyme.

It catalyses the reaction H2O2 + AH2 = A + 2 H2O. The catalysed reaction is 2 H2O2 = O2 + 2 H2O. Its function is as follows. Bifunctional enzyme with both catalase and broad-spectrum peroxidase activity. This chain is Catalase-peroxidase, found in Shigella boydii serotype 4 (strain Sb227).